Here is a 118-residue protein sequence, read N- to C-terminus: Putative pterin-4-alpha-carbinolamine dehydratase (118 aa).

It belongs to the pterin-4-alpha-carbinolamine dehydratase family.

It catalyses the reaction (4aS,6R)-4a-hydroxy-L-erythro-5,6,7,8-tetrahydrobiopterin = (6R)-L-erythro-6,7-dihydrobiopterin + H2O. In Pseudomonas putida (strain GB-1), this protein is Putative pterin-4-alpha-carbinolamine dehydratase.